We begin with the raw amino-acid sequence, 376 residues long: 26S proteasome non-ATPase regulatory subunit 13 (376 aa).

The PCI domain occupies 171–338 (SYYKDALRFL…KRVHMTWVQP (168 aa)). The residue at position 298 (lysine 298) is an N6-acetyllysine.

Belongs to the proteasome subunit S11 family. Component of the 19S proteasome regulatory particle complex. The 26S proteasome consists of a 20S core particle (CP) and two 19S regulatory subunits (RP). The regulatory particle is made of a lid composed of 9 subunits including PSMD13, a base containing 6 ATPases and few additional components.

Its function is as follows. Component of the 26S proteasome, a multiprotein complex involved in the ATP-dependent degradation of ubiquitinated proteins. This complex plays a key role in the maintenance of protein homeostasis by removing misfolded or damaged proteins, which could impair cellular functions, and by removing proteins whose functions are no longer required. Therefore, the proteasome participates in numerous cellular processes, including cell cycle progression, apoptosis, or DNA damage repair. This is 26S proteasome non-ATPase regulatory subunit 13 (PSMD13) from Homo sapiens (Human).